The primary structure comprises 441 residues: Transcription factor bHLH90 (441 aa).

A bHLH domain is found at 260 to 309 (NFKSKNLHSERKRRERINQAMYGLRAVVPKITKLNKIGIFSDAVDYINEL).

In terms of assembly, homodimer. Expressed constitutively in roots, leaves, stems, and flowers.

It is found in the nucleus. In Arabidopsis thaliana (Mouse-ear cress), this protein is Transcription factor bHLH90 (BHLH90).